The primary structure comprises 393 residues: Cysteine protease ATG4B (393 aa).

N-acetylmethionine is present on M1. At S34 the chain carries Phosphoserine; by PKB/AKT1 and PKB/AKT2. C74 functions as the Nucleophile in the catalytic mechanism. C189 bears the S-nitrosocysteine mark. Active-site residues include D278 and H280. 2 positions are modified to S-nitrosocysteine: C292 and C301. Cysteines 292 and 361 form a disulfide. Residue S316 is modified to Phosphoserine; by ULK1. A Phosphoserine; by STK26 modification is found at S383. Positions 388–391 (FEIL) match the LIR motif. At S392 the chain carries Phosphoserine.

It belongs to the peptidase C54 family. Interacts with PFKP; promoting phosphorylation of ATG4B at Ser-34. Interacts with GBP7. In terms of processing, phosphorylation at Ser-383 and Ser-392 promotes autophagy by increasing protein delipidation activity without affecting proteolytic activation of ATG8 proteins. Phosphorylation at Ser-316 by ULK1 inhibits autophagy by decreasing both proteolytic activation and delipidation activities. Phosphorylation at Ser-316 is dephosphorylated by protein phosphatase 2A (PP2A). Phosphorylation at Ser-34 by AKT2 promotes its hydrolase activity, leading to increased proteolytic activation and delipidation of ATG8 family proteins. Phosphorylation at Ser-34 by AKT1 promotes mitochondrial localization and inhibition of the F1F0-ATP synthase activity, leading to elevation of mitochondrial reactive oxygen species (ROS). Ubiquitinated by RNF5, leading to its degradation by the proteasome. Post-translationally, S-nitrosylation at Cys-189 and Cys-292 in response to high glucose decreases both proteolytic activation and delipidation activities. In terms of processing, O-glycosylated by OGT, leading to increase protease activity, thereby promoting the proteolytic activation of ATG8 family proteins. Forms reversible intrachain disulfide bonds in response to oxidative stress. Forms interchain disulfide bonds, leading to formation of homooligomers in response to oxidation.

The protein localises to the cytoplasm. It localises to the cytosol. Its subcellular location is the cytoplasmic vesicle. The protein resides in the autophagosome. It is found in the endoplasmic reticulum. The protein localises to the mitochondrion. The enzyme catalyses [protein]-C-terminal L-amino acid-glycyl-phosphatidylethanolamide + H2O = [protein]-C-terminal L-amino acid-glycine + a 1,2-diacyl-sn-glycero-3-phosphoethanolamine. It catalyses the reaction [protein]-C-terminal L-amino acid-glycyl-phosphatidylserine + H2O = [protein]-C-terminal L-amino acid-glycine + a 1,2-diacyl-sn-glycero-3-phospho-L-serine. With respect to regulation, inhibited by N-ethylmaleimide. Redox-regulated during autophagy since reducing conditions activate ATG4A whereas an oxidizing environment such as the presence of H(2)O(2) inhibits its activity. The cysteine protease activity compounds is inhibited by styrylquinoline compounds 4-28 and LV-320. Its function is as follows. Cysteine protease that plays a key role in autophagy by mediating both proteolytic activation and delipidation of ATG8 family proteins. Required for canonical autophagy (macroautophagy), non-canonical autophagy as well as for mitophagy. The protease activity is required for proteolytic activation of ATG8 family proteins: cleaves the C-terminal amino acid of ATG8 proteins MAP1LC3A, MAP1LC3B, MAP1LC3C, GABARAPL1, GABARAPL2 and GABARAP, to reveal a C-terminal glycine. Exposure of the glycine at the C-terminus is essential for ATG8 proteins conjugation to phosphatidylethanolamine (PE) and insertion to membranes, which is necessary for autophagy. Protease activity is also required to counteract formation of high-molecular weight conjugates of ATG8 proteins (ATG8ylation): acts as a deubiquitinating-like enzyme that removes ATG8 conjugated to other proteins, such as ATG3. In addition to the protease activity, also mediates delipidation of ATG8 family proteins. Catalyzes delipidation of PE-conjugated forms of ATG8 proteins during macroautophagy. Also involved in non-canonical autophagy, a parallel pathway involving conjugation of ATG8 proteins to single membranes at endolysosomal compartments, by catalyzing delipidation of ATG8 proteins conjugated to phosphatidylserine (PS). Compared to other members of the family (ATG4A, ATG4C or ATG4C), constitutes the major protein for proteolytic activation of ATG8 proteins, while it displays weaker delipidation activity than other ATG4 paralogs. Involved in phagophore growth during mitophagy independently of its protease activity and of ATG8 proteins: acts by regulating ATG9A trafficking to mitochondria and promoting phagophore-endoplasmic reticulum contacts during the lipid transfer phase of mitophagy. This Homo sapiens (Human) protein is Cysteine protease ATG4B.